A 409-amino-acid polypeptide reads, in one-letter code: FBD-associated F-box protein At4g10400 (409 aa).

One can recognise an F-box domain in the interval 1–47 (MDRISGLPDEVLVKILSFVPTKVAVSTSILSKRWEFLWMWLTKLKFG). The FBD domain occupies 330-379 (SWNQPSIVPECMLSSLQKFTWFKYLGRPQDRDIAVYILKNACRLRTATIK).

The sequence is that of FBD-associated F-box protein At4g10400 from Arabidopsis thaliana (Mouse-ear cress).